The primary structure comprises 318 residues: Acetyl-coenzyme A carboxylase carboxyl transferase subunit alpha (318 aa).

Residues 34–295 (DIEDQISQLR…KQAIKKDLSE (262 aa)) form the CoA carboxyltransferase C-terminal domain.

The protein belongs to the AccA family. As to quaternary structure, acetyl-CoA carboxylase is a heterohexamer composed of biotin carboxyl carrier protein (AccB), biotin carboxylase (AccC) and two subunits each of ACCase subunit alpha (AccA) and ACCase subunit beta (AccD).

The protein localises to the cytoplasm. The enzyme catalyses N(6)-carboxybiotinyl-L-lysyl-[protein] + acetyl-CoA = N(6)-biotinyl-L-lysyl-[protein] + malonyl-CoA. Its pathway is lipid metabolism; malonyl-CoA biosynthesis; malonyl-CoA from acetyl-CoA: step 1/1. Functionally, component of the acetyl coenzyme A carboxylase (ACC) complex. First, biotin carboxylase catalyzes the carboxylation of biotin on its carrier protein (BCCP) and then the CO(2) group is transferred by the carboxyltransferase to acetyl-CoA to form malonyl-CoA. This is Acetyl-coenzyme A carboxylase carboxyl transferase subunit alpha from Colwellia psychrerythraea (strain 34H / ATCC BAA-681) (Vibrio psychroerythus).